A 460-amino-acid polypeptide reads, in one-letter code: tRNA modification GTPase MnmE (460 aa).

3 residues coordinate (6S)-5-formyl-5,6,7,8-tetrahydrofolate: Arg-29, Glu-89, and Arg-128. One can recognise a TrmE-type G domain in the interval 224-382 (GVPTVIIGKP…LKQNLLEIIQ (159 aa)). Residue Asn-234 coordinates K(+). GTP-binding positions include 234-239 (NAGKST), 253-259 (SEIAGTT), and 278-281 (DTAG). Mg(2+) is bound at residue Ser-238. Ser-253, Ile-255, and Thr-258 together coordinate K(+). Mg(2+) is bound at residue Thr-259. Lys-460 provides a ligand contact to (6S)-5-formyl-5,6,7,8-tetrahydrofolate.

The protein belongs to the TRAFAC class TrmE-Era-EngA-EngB-Septin-like GTPase superfamily. TrmE GTPase family. Homodimer. Heterotetramer of two MnmE and two MnmG subunits. K(+) serves as cofactor.

It localises to the cytoplasm. Exhibits a very high intrinsic GTPase hydrolysis rate. Involved in the addition of a carboxymethylaminomethyl (cmnm) group at the wobble position (U34) of certain tRNAs, forming tRNA-cmnm(5)s(2)U34. The polypeptide is tRNA modification GTPase MnmE (Cytophaga hutchinsonii (strain ATCC 33406 / DSM 1761 / CIP 103989 / NBRC 15051 / NCIMB 9469 / D465)).